Consider the following 518-residue polypeptide: ETHYLENE INSENSITIVE 3-like 2 protein (518 aa).

Residues aspartate 37–glycine 73 are a coiled coil. A disordered region spans residues phenylalanine 450 to glutamine 518. 2 stretches are compositionally biased toward polar residues: residues proline 475–leucine 484 and glycine 500–glutamine 518.

This sequence belongs to the EIN3 family. As to quaternary structure, acts as a homodimer to bind the primary ethylene response element.

It is found in the nucleus. Functionally, probable transcription factor acting as a positive regulator in the ethylene response pathway. Could bind the primary ethylene response element present in the ETHYLENE-RESPONSE-FACTOR1 promoter. The protein is ETHYLENE INSENSITIVE 3-like 2 protein (EIL2) of Arabidopsis thaliana (Mouse-ear cress).